We begin with the raw amino-acid sequence, 199 residues long: uncharacterized protein (199 aa).

Residues 21 to 38 traverse the membrane as a helical segment; it reads ISPSATNFIVSLVIMILI.

It localises to the membrane. This is an uncharacterized protein from Saccharomyces cerevisiae (strain ATCC 204508 / S288c) (Baker's yeast).